A 479-amino-acid polypeptide reads, in one-letter code: Aldehyde dehydrogenase family 3 member B2 (479 aa).

Catalysis depends on residues glutamate 223 and cysteine 257. The residue at position 476 (cysteine 476) is a Cysteine methyl ester. Cysteine 476 carries S-geranylgeranyl cysteine lipidation. The propeptide at 477-479 (TLL) is removed in mature form.

It belongs to the aldehyde dehydrogenase family. Post-translationally, geranylgeranylation is important for localization to lipid droplets and enzyme activity. As to expression, expressed in testis, white adipose tissue, lung, small intestine, kidney, spleen and liver.

The protein resides in the lipid droplet. The enzyme catalyses an aldehyde + NAD(+) + H2O = a carboxylate + NADH + 2 H(+). It catalyses the reaction a long-chain fatty aldehyde + NAD(+) + H2O = a long-chain fatty acid + NADH + 2 H(+). The catalysed reaction is a medium-chain fatty aldehyde + NAD(+) + H2O = a medium-chain fatty acid + NADH + 2 H(+). It carries out the reaction hexadecanoate + NADH + 2 H(+) = hexadecanal + NAD(+) + H2O. The enzyme catalyses octanal + NAD(+) + H2O = octanoate + NADH + 2 H(+). It functions in the pathway alcohol metabolism; ethanol degradation; acetate from ethanol: step 2/2. In terms of biological role, oxidizes medium and long chain fatty aldehydes in lipid droplets into non-toxic fatty acids. This Mus musculus (Mouse) protein is Aldehyde dehydrogenase family 3 member B2.